A 294-amino-acid chain; its full sequence is MNFFQAIILGIVQALTEYLPVSSSAHIRIFGDLMLGSDPGAAFTAIIQIGTELAVILYFRHDIINILTHWFSCLFGKNGKDWKARMGRGDNYATLGWNIIVGSIPIIILGFTLQNVIETSLRNLWITVTVLLVFGILLWMVDAKARQNKTMNDMTYRDAFLFGLGQSMALIPGVSRSGGTITVGRALGYTREAAVRLSFLMAIPAVFGSGLLEAIKAVKNYKTDAMFPGWGPTLVAMVISFVLGYIVIIGFLKFVSNFSYKAFAIYRIGLAVVVALLLIVGVLPAIDPSVVAAA.

The next 6 membrane-spanning stretches (helical) occupy residues 39 to 59 (PGAA…ILYF), 93 to 113 (ATLG…GFTL), 123 to 143 (NLWI…MVDA), 198 to 218 (SFLM…IKAV), 232 to 252 (PTLV…IGFL), and 268 to 288 (IGLA…AIDP).

This sequence belongs to the UppP family.

It localises to the cell membrane. The enzyme catalyses di-trans,octa-cis-undecaprenyl diphosphate + H2O = di-trans,octa-cis-undecaprenyl phosphate + phosphate + H(+). In terms of biological role, catalyzes the dephosphorylation of undecaprenyl diphosphate (UPP). Confers resistance to bacitracin. This chain is Undecaprenyl-diphosphatase, found in Bifidobacterium longum (strain DJO10A).